We begin with the raw amino-acid sequence, 1004 residues long: Protein Wnt-5 (1004 aa).

A signal peptide spans 1 to 29 (MSCYRKRHFLLWLLRAVCMLHLTARGAYA). Residues Asn60, Asn66, Asn115, and Asn219 are each glycosylated (N-linked (GlcNAc...) asparagine). The tract at residues 238–298 (QKDKAKTSGA…NPGEQPIGGY (61 aa)) is disordered. 2 N-linked (GlcNAc...) asparagine glycosylation sites follow: Asn307 and Asn341. A disordered region spans residues 310–407 (LLKPTDTDSH…ERDEWFRGQS (98 aa)). Over residues 389 to 403 (RREEQQRQRERDEWF) the composition is skewed to basic and acidic residues. Asn422 is a glycosylation site (N-linked (GlcNAc...) asparagine). Positions 438 to 472 (KVSSEGSDGELLSRVERSQPSISSSSSSSSSSSRK) are disordered. Over residues 458–470 (SISSSSSSSSSSS) the composition is skewed to low complexity. Residues Asn484, Asn485, Asn528, and Asn593 are each glycosylated (N-linked (GlcNAc...) asparagine). Intrachain disulfides connect Cys583–Cys594, Cys633–Cys641, and Cys643–Cys661. Asn724 is a glycosylation site (N-linked (GlcNAc...) asparagine). The interval 790–822 (FFKGEQQPRKKKRKNQRAAADAPAYPRNGIKES) is disordered. Disulfide bonds link Cys862-Cys876, Cys864-Cys871, Cys933-Cys964, Cys949-Cys959, Cys963-Cys1003, Cys979-Cys994, Cys981-Cys991, and Cys986-Cys987. Residue Ser868 is the site of O-palmitoleoyl serine; by PORCN attachment. N-linked (GlcNAc...) asparagine glycosylation is present at Asn952.

The protein belongs to the Wnt family. Interacts with porcupine (por). In terms of processing, glycosylated, glycosylation is stimulated by porcupine at the ER. Post-translationally, palmitoleoylated by porcupine. The lipid group functions as a sorting signal, targeting the ligand to polarized vesicles that transport Wnt5 to unique sites at the cell surface. Depalmitoleoylated by notum, leading to inhibit Wnt signaling pathway. In terms of tissue distribution, dynamic expression pattern during embryogenesis. Expression is seen in the limb primordia of the head and thoracic segments, mesodermal and neurogenic regions.

Its subcellular location is the secreted. The protein localises to the extracellular space. The protein resides in the extracellular matrix. Binds as a ligand to a family of frizzled seven-transmembrane receptors and acts through a cascade of genes on the nucleus. Probable developmental protein. May be a signaling molecule which affects the development of discrete regions of tissues. Is likely to signal over only few cell diameters. May have a role in limb and CNS development; may be a downstream target of Dll that acts in the specification of these primordia. The polypeptide is Protein Wnt-5 (Wnt5) (Drosophila melanogaster (Fruit fly)).